The primary structure comprises 149 residues: MTKGQRHIKIREIIASQEIETQDELVDILKADGYNITQATVSRDIKELHLVKVPTNNGTYKYSLPADQRFNPLSKLKRSLMDAFIKMDAASHLIVLKTMPGNAQAIGALMDNLDWEEIMGTICGDDTILIICRTPDDTETVSSKILELL.

The protein belongs to the ArgR family.

It is found in the cytoplasm. It functions in the pathway amino-acid biosynthesis; L-arginine biosynthesis [regulation]. Its function is as follows. Regulates arginine biosynthesis genes. In Bacillus pumilus (strain SAFR-032), this protein is Arginine repressor.